The chain runs to 133 residues: Large ribosomal subunit protein eL32 (133 aa).

This sequence belongs to the eukaryotic ribosomal protein eL32 family.

The sequence is that of Large ribosomal subunit protein eL32 (rpl32) from Dictyostelium discoideum (Social amoeba).